The chain runs to 355 residues: MDNERQKALDTVIKNMEKSFGKGAVMKLGDNKARRVSSISSGSVTLDNALGVGGYPKGRIVEIYGPESSGKTTVALHAIAEVQKQGGVAAFIDAEHALDPVYAEALGVDIDNLYLSQPDHGEQGLEIAEAFVRSGAVDIIVVDSVAALTPKAEIEGEMGDTHVGLQARLMSQALRKLSGAISKSNCTAVFINQIREKVGVMFGNPETTPGGRALKFYSSVRLEVRRAEQLKQGQEIVGNRTKIKVVKNKVAPPFRVAEVDIMYGQGISKEGELIDLGVENDIVDKSGAWYSYNGDRMGQGKENVKNYLKEHPEIKQDIDNKLRQKLGIFDGDIEEKDEKQAEAEKNENTNLFDEE.

65-72 (GPESSGKT) provides a ligand contact to ATP. The interval 333–355 (IEEKDEKQAEAEKNENTNLFDEE) is disordered. Residues 336 to 347 (KDEKQAEAEKNE) are compositionally biased toward basic and acidic residues.

It belongs to the RecA family.

The protein resides in the cytoplasm. In terms of biological role, can catalyze the hydrolysis of ATP in the presence of single-stranded DNA, the ATP-dependent uptake of single-stranded DNA by duplex DNA, and the ATP-dependent hybridization of homologous single-stranded DNAs. It interacts with LexA causing its activation and leading to its autocatalytic cleavage. This is Protein RecA from Staphylococcus carnosus (strain TM300).